A 566-amino-acid chain; its full sequence is Membrane protein insertase YidC (566 aa).

5 consecutive transmembrane segments (helical) span residues 3–23 (IKRI…FNAW), 346–366 (GWLW…HAVV), 369–389 (WGWS…WFSA), 436–456 (GGCL…YVII), and 509–529 (MWIL…GLVL).

The protein belongs to the OXA1/ALB3/YidC family. Type 1 subfamily. Interacts with the Sec translocase complex via SecD. Specifically interacts with transmembrane segments of nascent integral membrane proteins during membrane integration.

It localises to the cell inner membrane. Its function is as follows. Required for the insertion and/or proper folding and/or complex formation of integral membrane proteins into the membrane. Involved in integration of membrane proteins that insert both dependently and independently of the Sec translocase complex, as well as at least some lipoproteins. Aids folding of multispanning membrane proteins. This chain is Membrane protein insertase YidC, found in Coxiella burnetii (strain Dugway 5J108-111).